A 576-amino-acid polypeptide reads, in one-letter code: Probable lysosomal cobalamin transporter (576 aa).

10 consecutive transmembrane segments (helical) span residues Leu-8–Ile-28, Val-40–Pro-60, Tyr-98–Trp-118, Thr-145–Ala-165, Val-188–Thr-208, Leu-312–Thr-332, Gly-347–Ala-367, Leu-377–Ile-397, Leu-419–Val-439, and Phe-503–Leu-523. Positions Arg-549–Gly-576 are disordered. Over residues Thr-561 to Gly-576 the composition is skewed to polar residues. N-linked (GlcNAc...) asparagine glycosylation is present at Asn-570.

The protein belongs to the LIMR family. LMBRD1 subfamily.

The protein resides in the lysosome membrane. In terms of biological role, probable lysosomal cobalamin transporter. Required to export cobalamin from lysosomes allowing its conversion to cofactors. The protein is Probable lysosomal cobalamin transporter of Aspergillus niger (strain ATCC MYA-4892 / CBS 513.88 / FGSC A1513).